A 559-amino-acid polypeptide reads, in one-letter code: Probable 2-ketoarginine decarboxylase AruI (559 aa).

Residue Glu-76 participates in thiamine diphosphate binding.

The protein belongs to the TPP enzyme family. Requires thiamine diphosphate as cofactor.

The enzyme catalyses 5-guanidino-2-oxopentanoate + H(+) = 4-guanidinobutanal + CO2. It participates in amino-acid degradation; L-arginine degradation. Catalyzes the decarboxylation of 2-ketoarginine, leading to the formation of 4-guanidinobutyraldehyde. The chain is Probable 2-ketoarginine decarboxylase AruI (aruI) from Pseudomonas aeruginosa (strain ATCC 15692 / DSM 22644 / CIP 104116 / JCM 14847 / LMG 12228 / 1C / PRS 101 / PAO1).